The following is a 373-amino-acid chain: Dual-specificity RNA methyltransferase RlmN (373 aa).

The active-site Proton acceptor is the Glu94. The 240-residue stretch at 100 to 339 (EEDRATLCVS…VIVRKTRGDD (240 aa)) folds into the Radical SAM core domain. A disulfide bridge links Cys107 with Cys344. Cys114, Cys118, and Cys121 together coordinate [4Fe-4S] cluster. Residues 168–169 (GE), Ser200, 222–224 (SIH), and Asn301 contribute to the S-adenosyl-L-methionine site. Cys344 (S-methylcysteine intermediate) is an active-site residue.

Belongs to the radical SAM superfamily. RlmN family. [4Fe-4S] cluster is required as a cofactor.

It is found in the cytoplasm. The catalysed reaction is adenosine(2503) in 23S rRNA + 2 reduced [2Fe-2S]-[ferredoxin] + 2 S-adenosyl-L-methionine = 2-methyladenosine(2503) in 23S rRNA + 5'-deoxyadenosine + L-methionine + 2 oxidized [2Fe-2S]-[ferredoxin] + S-adenosyl-L-homocysteine. It carries out the reaction adenosine(37) in tRNA + 2 reduced [2Fe-2S]-[ferredoxin] + 2 S-adenosyl-L-methionine = 2-methyladenosine(37) in tRNA + 5'-deoxyadenosine + L-methionine + 2 oxidized [2Fe-2S]-[ferredoxin] + S-adenosyl-L-homocysteine. In terms of biological role, specifically methylates position 2 of adenine 2503 in 23S rRNA and position 2 of adenine 37 in tRNAs. m2A2503 modification seems to play a crucial role in the proofreading step occurring at the peptidyl transferase center and thus would serve to optimize ribosomal fidelity. The sequence is that of Dual-specificity RNA methyltransferase RlmN from Shewanella sediminis (strain HAW-EB3).